The following is a 1354-amino-acid chain: Phosphoribosylformylglycinamidine synthase (1354 aa).

ATP is bound by residues 327–338 (GATTGTGGRLRD), 407–409 (SGF), and A714. Residues D715, E754, N758, and D918 each contribute to the Mg(2+) site. ATP is bound at residue S920. One can recognise a Glutamine amidotransferase type-1 domain in the interval 1087–1337 (VAVLREEGVN…EVSPTQSESP (251 aa)). C1180 acts as the Nucleophile in catalysis. Catalysis depends on residues H1310 and E1312.

This sequence in the N-terminal section; belongs to the FGAMS family.

The enzyme catalyses N(2)-formyl-N(1)-(5-phospho-beta-D-ribosyl)glycinamide + L-glutamine + ATP + H2O = 2-formamido-N(1)-(5-O-phospho-beta-D-ribosyl)acetamidine + L-glutamate + ADP + phosphate + H(+). It participates in purine metabolism; IMP biosynthesis via de novo pathway; 5-amino-1-(5-phospho-D-ribosyl)imidazole from N(2)-formyl-N(1)-(5-phospho-D-ribosyl)glycinamide: step 1/2. Its function is as follows. Phosphoribosylformylglycinamidine synthase involved in the purines biosynthetic pathway. Catalyzes the ATP-dependent conversion of formylglycinamide ribonucleotide (FGAR) and glutamine to yield formylglycinamidine ribonucleotide (FGAM) and glutamate. Because of its role in metabolisms, is involved in sleep regulation. The protein is Phosphoribosylformylglycinamidine synthase of Drosophila melanogaster (Fruit fly).